We begin with the raw amino-acid sequence, 126 residues long: Prefoldin subunit beta (126 aa).

Belongs to the prefoldin subunit beta family. In terms of assembly, heterohexamer of two alpha and four beta subunits.

It localises to the cytoplasm. Molecular chaperone capable of stabilizing a range of proteins. Seems to fulfill an ATP-independent, HSP70-like function in archaeal de novo protein folding. The polypeptide is Prefoldin subunit beta (Pyrobaculum neutrophilum (strain DSM 2338 / JCM 9278 / NBRC 100436 / V24Sta) (Thermoproteus neutrophilus)).